Here is a 275-residue protein sequence, read N- to C-terminus: Membrane protein insertase YidC 2 (275 aa).

Positions 1 to 21 (MKKKNIILISVLLGALLLLTG) are cleaved as a signal peptide. Cys22 is lipidated: N-palmitoyl cysteine. Cys22 carries the S-diacylglycerol cysteine lipid modification. 4 helical membrane passes run 48–68 (FVAK…TLLI), 133–153 (QMGC…YYAI), 174–194 (MVLA…SMIG), and 212–232 (IMIL…WAVG).

Belongs to the OXA1/ALB3/YidC family. Type 2 subfamily.

Its subcellular location is the cell membrane. Its function is as follows. Required for the insertion and/or proper folding and/or complex formation of integral membrane proteins into the membrane. Involved in integration of membrane proteins that insert both dependently and independently of the Sec translocase complex, as well as at least some lipoproteins. The protein is Membrane protein insertase YidC 2 of Listeria monocytogenes serotype 4b (strain F2365).